A 172-amino-acid polypeptide reads, in one-letter code: MDKVLNREESMELMDLLGLERAAWGNLPLMRKAYLRKCKEFHPDKGGDEDKMKRMNTLYKKMEQDVKVAHQPDFGAWHSSEVGSDFPPCPDTLYCKDWPLCATKPSAHCPCMLCQLRNKHVYRKFLRRDPLVWIDCYCFDCFRQWFGLDLNEEALLWWSHIIGETPFRDLKL.

At methionine 1 the chain carries N-acetylmethionine; by host. Residues 12–75 (ELMDLLGLER…VKVAHQPDFG (64 aa)) enclose the J domain. The C4-type; atypical zinc finger occupies 101 to 114 (CATKPSAHCPCMLC). An H1C3-type; atypical zinc finger spans residues 120-141 (HVYRKFLRRDPLVWIDCYCFDC).

Interacts with host PPP2R1A; the interaction inhibits PP2A activity.

The protein localises to the host cytoplasm. Its subcellular location is the host nucleus. Promotes efficient viral genome replication by accelerating both G1 and S phase progression of the cell cycle. Inhibits host PP2A by binding to the A subunit, thereby displacing lower affinity regulatory B subunit. Inactivation of PP2A in turn results in the transactivation of cyclin A and cyclin D1 promoters. Late during the infection cycle, ST may induce dephosphorylation of host MTOR, leading to the inhibition of cap-dependent translation. May establish and maintain high levels of viral genomes during persistent infection in cell culture. This Simian virus 12 (strain wt100) (SV-12) protein is Small t antigen.